The sequence spans 294 residues: Phosphatidylserine decarboxylase proenzyme (294 aa).

Residues aspartate 113, histidine 169, and serine 256 each act as charge relay system; for autoendoproteolytic cleavage activity in the active site. Serine 256 serves as the catalytic Schiff-base intermediate with substrate; via pyruvic acid; for decarboxylase activity. Serine 256 is modified (pyruvic acid (Ser); by autocatalysis).

Belongs to the phosphatidylserine decarboxylase family. PSD-B subfamily. Prokaryotic type II sub-subfamily. In terms of assembly, heterodimer of a large membrane-associated beta subunit and a small pyruvoyl-containing alpha subunit. The cofactor is pyruvate. Is synthesized initially as an inactive proenzyme. Formation of the active enzyme involves a self-maturation process in which the active site pyruvoyl group is generated from an internal serine residue via an autocatalytic post-translational modification. Two non-identical subunits are generated from the proenzyme in this reaction, and the pyruvate is formed at the N-terminus of the alpha chain, which is derived from the carboxyl end of the proenzyme. The autoendoproteolytic cleavage occurs by a canonical serine protease mechanism, in which the side chain hydroxyl group of the serine supplies its oxygen atom to form the C-terminus of the beta chain, while the remainder of the serine residue undergoes an oxidative deamination to produce ammonia and the pyruvoyl prosthetic group on the alpha chain. During this reaction, the Ser that is part of the protease active site of the proenzyme becomes the pyruvoyl prosthetic group, which constitutes an essential element of the active site of the mature decarboxylase.

It localises to the cell membrane. It carries out the reaction a 1,2-diacyl-sn-glycero-3-phospho-L-serine + H(+) = a 1,2-diacyl-sn-glycero-3-phosphoethanolamine + CO2. The protein operates within phospholipid metabolism; phosphatidylethanolamine biosynthesis; phosphatidylethanolamine from CDP-diacylglycerol: step 2/2. Catalyzes the formation of phosphatidylethanolamine (PtdEtn) from phosphatidylserine (PtdSer). The chain is Phosphatidylserine decarboxylase proenzyme from Clostridium perfringens (strain SM101 / Type A).